Reading from the N-terminus, the 541-residue chain is Glucans biosynthesis protein D (541 aa).

The tat-type signal signal peptide spans 1–29 (MHRRNLLKASMAIAAYTGLSASGLLAAQA).

It belongs to the OpgD/OpgG family. Predicted to be exported by the Tat system. The position of the signal peptide cleavage has not been experimentally proven.

The protein resides in the periplasm. It participates in glycan metabolism; osmoregulated periplasmic glucan (OPG) biosynthesis. In terms of biological role, probably involved in the control of the structural glucose backbone of osmoregulated periplasmic glucans (OPGs). This chain is Glucans biosynthesis protein D, found in Pseudomonas fluorescens (strain SBW25).